The chain runs to 359 residues: MPLRALVAVIVTTAVMLVPRAWAQTAWERYKARFMMPDARIIDTANGNVSHTEGQGFAMLLAVANNDRPAFDKLWQWTDSTLRDKSNGLFYWRYNPVAPDPIADKNNATDGDTLIAWALLRAQKQWQDKRYATASDAITASLLKYTVVTFAGRQVMLPGVKGFNRNDHLNLNPSYFIFPAWRAFAERTHLTAWRTLQSDGQALLGQMGWGKSHLPSDWVALRADGKMLPAKEWPPRMSFDAIRIPLYISWVDPHSALLAPWKAWMQSYPRLQTPAWINVSTNEVAPWNMAGGLLAVRDLTLGEPLERRRLTTRMIITPPASSCWSGWRNRISASAVMALQVSQPVCLRAERKEQERLTM.

Positions 1–23 are cleaved as a signal peptide; the sequence is MPLRALVAVIVTTAVMLVPRAWA. Catalysis depends on glutamate 53, which acts as the Proton donor. Aspartate 110 (nucleophile) is an active-site residue.

The protein belongs to the glycosyl hydrolase 8 (cellulase D) family.

The catalysed reaction is Endohydrolysis of (1-&gt;4)-beta-D-glucosidic linkages in cellulose, lichenin and cereal beta-D-glucans.. The biological conversion of cellulose to glucose generally requires three types of hydrolytic enzymes: (1) Endoglucanases which cut internal beta-1,4-glucosidic bonds; (2) Exocellobiohydrolases that cut the disaccharide cellobiose from the non-reducing end of the cellulose polymer chain; (3) Beta-1,4-glucosidases which hydrolyze the cellobiose and other short cello-oligosaccharides to glucose. The sequence is that of Endoglucanase from Cellulomonas uda.